The sequence spans 279 residues: Elongation factor Ts (279 aa).

The involved in Mg(2+) ion dislocation from EF-Tu stretch occupies residues 80-83 (TDFV).

This sequence belongs to the EF-Ts family.

It localises to the cytoplasm. Associates with the EF-Tu.GDP complex and induces the exchange of GDP to GTP. It remains bound to the aminoacyl-tRNA.EF-Tu.GTP complex up to the GTP hydrolysis stage on the ribosome. This Borreliella afzelii (strain PKo) (Borrelia afzelii) protein is Elongation factor Ts.